The sequence spans 647 residues: DNA ligase (647 aa).

NAD(+) contacts are provided by residues 30–34 (DEEYD), 79–80 (SM), and glutamate 105. Lysine 107 (N6-AMP-lysine intermediate) is an active-site residue. Arginine 128, glutamate 162, and lysine 301 together coordinate NAD(+). Residues cysteine 395, cysteine 398, cysteine 411, and cysteine 416 each contribute to the Zn(2+) site. The BRCT domain maps to 570-647 (KSDGVIFGKT…ESAFNELVKE (78 aa)).

This sequence belongs to the NAD-dependent DNA ligase family. LigA subfamily. Requires Mg(2+) as cofactor. Mn(2+) serves as cofactor.

The catalysed reaction is NAD(+) + (deoxyribonucleotide)n-3'-hydroxyl + 5'-phospho-(deoxyribonucleotide)m = (deoxyribonucleotide)n+m + AMP + beta-nicotinamide D-nucleotide.. In terms of biological role, DNA ligase that catalyzes the formation of phosphodiester linkages between 5'-phosphoryl and 3'-hydroxyl groups in double-stranded DNA using NAD as a coenzyme and as the energy source for the reaction. It is essential for DNA replication and repair of damaged DNA. This is DNA ligase from Campylobacter jejuni (strain RM1221).